Here is a 65-residue protein sequence, read N- to C-terminus: Ferredoxin-like protein in vnf region (65 aa).

4Fe-4S ferredoxin-type domains lie at 2–30 and 32–65; these read AMAIDGYECTVCGDCEPVCPTGSIVFRDD and YAIEADSCNECTDVGEPRCLGVCPVDLCIQPLDD. [4Fe-4S] cluster is bound by residues Cys10, Cys13, Cys16, Cys20, Cys39, Cys42, Cys50, and Cys54.

[4Fe-4S] cluster serves as cofactor.

In Azotobacter vinelandii, this protein is Ferredoxin-like protein in vnf region.